The primary structure comprises 334 residues: Protein-methionine-sulfoxide reductase catalytic subunit MsrP (334 aa).

A signal peptide (tat-type signal) is located at residues 1-44 (MKKIRPLTEADVTAESAFFMQRRQVLKALGISAAALSLPSTAQA). Residues N88, 91 to 92 (YE), C146, T181, N233, R238, and 249 to 251 (GIK) each bind Mo-molybdopterin.

Belongs to the MsrP family. Heterodimer of a catalytic subunit (MsrP) and a heme-binding subunit (MsrQ). The cofactor is Mo-molybdopterin. Predicted to be exported by the Tat system. The position of the signal peptide cleavage has not been experimentally proven.

It localises to the periplasm. It carries out the reaction L-methionyl-[protein] + a quinone + H2O = L-methionyl-(S)-S-oxide-[protein] + a quinol. The enzyme catalyses L-methionyl-[protein] + a quinone + H2O = L-methionyl-(R)-S-oxide-[protein] + a quinol. Functionally, part of the MsrPQ system that repairs oxidized periplasmic proteins containing methionine sulfoxide residues (Met-O), using respiratory chain electrons. Thus protects these proteins from oxidative-stress damage caused by reactive species of oxygen and chlorine generated by the host defense mechanisms. MsrPQ is essential for the maintenance of envelope integrity under bleach stress, rescuing a wide series of structurally unrelated periplasmic proteins from methionine oxidation, including the primary periplasmic chaperone SurA and the lipoprotein Pal. The catalytic subunit MsrP is non-stereospecific, being able to reduce both (R-) and (S-) diastereoisomers of methionine sulfoxide. The protein is Protein-methionine-sulfoxide reductase catalytic subunit MsrP of Salmonella newport (strain SL254).